A 315-amino-acid polypeptide reads, in one-letter code: Olfactory receptor 5A1 (315 aa).

The Extracellular portion of the chain corresponds to 1 to 28; sequence MSITKAWNSSSVTMFILLGFTDHPELQA. An N-linked (GlcNAc...) asparagine glycan is attached at asparagine 8. The chain crosses the membrane as a helical span at residues 29 to 52; it reads LLFVTFLGIYLTTLAWNLALIFLI. At 53 to 60 the chain is on the cytoplasmic side; that stretch reads RGDTHLHT. A helical membrane pass occupies residues 61–82; that stretch reads PMYFFLSNLSFIDICYSSAVAP. The Extracellular segment spans residues 83–103; it reads NMLTDFFWEQKTISFVGCAAQ. A disulfide bond links cysteine 100 and cysteine 192. The chain crosses the membrane as a helical span at residues 104 to 123; sequence FFFFVGMGLSECLLLTAMAY. Residues 124–142 are Cytoplasmic-facing; it reads DRYAAISSPLLYPTIMTQG. A helical transmembrane segment spans residues 143-161; that stretch reads LCTRMVVGAYVGGFLSSLI. The Extracellular portion of the chain corresponds to 162 to 198; it reads QASSIFRLHFCGPNIINHFFCDLPPVLALSCSDTFLS. A helical membrane pass occupies residues 199–222; it reads QVVNFLVVVTVGGTSFLQLLISYG. Residues 223 to 239 lie on the Cytoplasmic side of the membrane; the sequence is YIVSAVLKIPSAEGRWK. A helical transmembrane segment spans residues 240-262; it reads ACNTCASHLMVVTLLFGTALFVY. The Extracellular portion of the chain corresponds to 263 to 275; sequence LRPSSSYLLGRDK. The chain crosses the membrane as a helical span at residues 276-295; it reads VVSVFYSLVIPMLNPLIYSL. Over 296–315 the chain is Cytoplasmic; that stretch reads RNKEIKDALWKVLERKKVFS.

Belongs to the G-protein coupled receptor 1 family.

The protein resides in the cell membrane. Odorant receptor. This Homo sapiens (Human) protein is Olfactory receptor 5A1 (OR5A1).